The primary structure comprises 901 residues: Protein translocase subunit SecA (901 aa).

ATP contacts are provided by residues Gln87, 105-109, and Asp512; that span reads GEGKT. The Zn(2+) site is built by Cys885, Cys887, Cys896, and His897.

It belongs to the SecA family. In terms of assembly, monomer and homodimer. Part of the essential Sec protein translocation apparatus which comprises SecA, SecYEG and auxiliary proteins SecDF-YajC and YidC. Zn(2+) serves as cofactor.

The protein resides in the cell inner membrane. The protein localises to the cytoplasm. The enzyme catalyses ATP + H2O + cellular proteinSide 1 = ADP + phosphate + cellular proteinSide 2.. In terms of biological role, part of the Sec protein translocase complex. Interacts with the SecYEG preprotein conducting channel. Has a central role in coupling the hydrolysis of ATP to the transfer of proteins into and across the cell membrane, serving both as a receptor for the preprotein-SecB complex and as an ATP-driven molecular motor driving the stepwise translocation of polypeptide chains across the membrane. The sequence is that of Protein translocase subunit SecA from Salmonella arizonae (strain ATCC BAA-731 / CDC346-86 / RSK2980).